Here is a 335-residue protein sequence, read N- to C-terminus: Glyceraldehyde-3-phosphate dehydrogenase, cytosolic (335 aa).

Residues 13 to 14 (RI), aspartate 35, and arginine 80 contribute to the NAD(+) site. Residues 151-153 (SCT), threonine 182, 211-212 (TG), and arginine 234 contribute to the D-glyceraldehyde 3-phosphate site. The active-site Nucleophile is cysteine 152. Asparagine 316 is a binding site for NAD(+).

Belongs to the glyceraldehyde-3-phosphate dehydrogenase family. As to quaternary structure, homotetramer.

It is found in the cytoplasm. It catalyses the reaction D-glyceraldehyde 3-phosphate + phosphate + NAD(+) = (2R)-3-phospho-glyceroyl phosphate + NADH + H(+). Its pathway is carbohydrate degradation; glycolysis; pyruvate from D-glyceraldehyde 3-phosphate: step 1/5. In Chondrus crispus (Carrageen Irish moss), this protein is Glyceraldehyde-3-phosphate dehydrogenase, cytosolic (GAPC).